The sequence spans 233 residues: Protein DOUBLE-STRAND BREAK FORMATION (233 aa).

Interacts with PRD1; this interaction facilitates a binding to PRD3. In terms of tissue distribution, specifically expressed in buds.

In terms of biological role, required for meiotic double-strand break (DSB) formation, the initial event for meiotic recombination. In Arabidopsis thaliana (Mouse-ear cress), this protein is Protein DOUBLE-STRAND BREAK FORMATION.